Reading from the N-terminus, the 198-residue chain is Transcription factor FapR (198 aa).

Positions 102–169 (NRIARGHHLF…RTIVEVNSYV (68 aa)) constitute a MaoC-like domain.

Belongs to the FapR family.

Functionally, transcriptional factor involved in regulation of membrane lipid biosynthesis by repressing genes involved in fatty acid and phospholipid metabolism. This chain is Transcription factor FapR, found in Geobacillus sp. (strain WCH70).